A 209-amino-acid polypeptide reads, in one-letter code: Probable glutathione peroxidase 8-B (209 aa).

Residues 18–40 (VFLVFFSMVLCTGILCVLQLKFL) traverse the membrane as a helical segment. The active site involves C79.

It belongs to the glutathione peroxidase family.

It localises to the membrane. The catalysed reaction is 2 glutathione + H2O2 = glutathione disulfide + 2 H2O. This chain is Probable glutathione peroxidase 8-B (gpx8-b), found in Xenopus laevis (African clawed frog).